Consider the following 290-residue polypeptide: 4-diphosphocytidyl-2-C-methyl-D-erythritol kinase (290 aa).

Lys-12 is a catalytic residue. Residue 97–107 participates in ATP binding; the sequence is PVASGIGGGSA. The active site involves Asp-139.

It belongs to the GHMP kinase family. IspE subfamily.

The catalysed reaction is 4-CDP-2-C-methyl-D-erythritol + ATP = 4-CDP-2-C-methyl-D-erythritol 2-phosphate + ADP + H(+). The protein operates within isoprenoid biosynthesis; isopentenyl diphosphate biosynthesis via DXP pathway; isopentenyl diphosphate from 1-deoxy-D-xylulose 5-phosphate: step 3/6. Catalyzes the phosphorylation of the position 2 hydroxy group of 4-diphosphocytidyl-2C-methyl-D-erythritol. The chain is 4-diphosphocytidyl-2-C-methyl-D-erythritol kinase from Parvibaculum lavamentivorans (strain DS-1 / DSM 13023 / NCIMB 13966).